Here is a 309-residue protein sequence, read N- to C-terminus: Tagatose-6-phosphate kinase (309 aa).

The protein belongs to the carbohydrate kinase PfkB family. LacC subfamily.

It carries out the reaction D-tagatofuranose 6-phosphate + ATP = D-tagatofuranose 1,6-bisphosphate + ADP + H(+). It functions in the pathway carbohydrate metabolism; D-tagatose 6-phosphate degradation; D-glyceraldehyde 3-phosphate and glycerone phosphate from D-tagatose 6-phosphate: step 1/2. The protein is Tagatose-6-phosphate kinase of Streptococcus pyogenes serotype M6 (strain ATCC BAA-946 / MGAS10394).